Here is a 401-residue protein sequence, read N- to C-terminus: Coenzyme A biosynthesis bifunctional protein CoaBC (401 aa).

The phosphopantothenoylcysteine decarboxylase stretch occupies residues 1–190; it reads MQTLAGKKIL…FQPKPLQDKS (190 aa). Cys159 serves as the catalytic Proton donor. Residues 191-401 are phosphopantothenate--cysteine ligase; it reads ILITAGPTRE…LKQIQTLMGH (211 aa). CTP is bound by residues Asp279, Lys289, 307 to 310, Phe326, Lys340, and Lys344; that span reads PDIV.

This sequence in the N-terminal section; belongs to the HFCD (homo-oligomeric flavin containing Cys decarboxylase) superfamily. It in the C-terminal section; belongs to the PPC synthetase family. Requires Mg(2+) as cofactor. FMN is required as a cofactor.

The enzyme catalyses N-[(R)-4-phosphopantothenoyl]-L-cysteine + H(+) = (R)-4'-phosphopantetheine + CO2. The catalysed reaction is (R)-4'-phosphopantothenate + L-cysteine + CTP = N-[(R)-4-phosphopantothenoyl]-L-cysteine + CMP + diphosphate + H(+). The protein operates within cofactor biosynthesis; coenzyme A biosynthesis; CoA from (R)-pantothenate: step 2/5. It participates in cofactor biosynthesis; coenzyme A biosynthesis; CoA from (R)-pantothenate: step 3/5. In terms of biological role, catalyzes two sequential steps in the biosynthesis of coenzyme A. In the first step cysteine is conjugated to 4'-phosphopantothenate to form 4-phosphopantothenoylcysteine. In the second step the latter compound is decarboxylated to form 4'-phosphopantotheine. The sequence is that of Coenzyme A biosynthesis bifunctional protein CoaBC from Vibrio vulnificus (strain YJ016).